We begin with the raw amino-acid sequence, 106 residues long: Follitropin subunit beta (106 aa).

Cystine bridges form between Cys1-Cys49, Cys15-Cys64, Cys18-Cys102, Cys26-Cys80, Cys30-Cys82, and Cys85-Cys92. N-linked (GlcNAc...) asparagine glycans are attached at residues Asn5 and Asn22.

Belongs to the glycoprotein hormones subunit beta family. As to quaternary structure, heterodimer. The active follitropin is a heterodimer composed of an alpha chain/CGA shared with other hormones and a unique beta chain/FSHB shown here.

It is found in the secreted. Its function is as follows. Together with the alpha chain CGA constitutes follitropin, the follicle-stimulating hormone, and provides its biological specificity to the hormone heterodimer. Binds FSHR, a G protein-coupled receptor, on target cells to activate downstream signaling pathways. Follitropin is involved in follicle development and spermatogenesis in reproductive organs. The chain is Follitropin subunit beta (FSHB) from Struthio camelus (Common ostrich).